The primary structure comprises 1604 residues: Metabotropic glutamate receptor-like protein R (1604 aa).

Positions 1 to 27 (MVIKKPFIFIFICFLICLLICIDLTNC) are cleaved as a signal peptide. Topologically, residues 28 to 1149 (NTINNNNNNN…TDVSKTKIAK (1122 aa)) are extracellular. Residues 38–69 (NNNNNNNNNNNNNNNNNNNNNNNNNNNNNNDN) show a composition bias toward low complexity. The disordered stretch occupies residues 38 to 72 (NNNNNNNNNNNNNNNNNNNNNNNNNNNNNNDNNEN). Residues 98 to 133 (DFYINKIKKEIKDREKYKNNIENEILKINSQKKRKK) adopt a coiled-coil conformation. The disordered stretch occupies residues 213 to 263 (NNNNNNNNNNNNNNNNNNKNNNNNNNNKNNNNNNNNKNNNNNNNNKNNNKN). N-linked (GlcNAc...) asparagine glycosylation is found at N285, N327, N359, N375, N489, N498, N525, N577, N593, N624, N768, N837, N841, N851, N864, N876, N885, N888, N913, N967, N991, N1097, and N1109. The chain crosses the membrane as a helical span at residues 1150–1170 (IIIGISAIIVSIGVLITAILT). Residues 1171 to 1184 (FIYRKRKIMRYSNP) lie on the Cytoplasmic side of the membrane. Residues 1185–1205 (VFLLIILVGCVCGLVSTFVSF) form a helical membrane-spanning segment. Over 1206-1211 (STTSAT) the chain is Extracellular. The chain crosses the membrane as a helical span at residues 1212 to 1232 (CSIRMVLIPLFFFIITSAIFI). The Cytoplasmic segment spans residues 1233–1256 (KQYRVYCLIRGVEELHDMSIENSY). Residues 1257-1277 (LLKLQSFILIIPAILIAVSVI) form a helical membrane-spanning segment. At 1278–1304 (ATRMHRKYNFDLQKETIQAYCYSKNFY) the chain is on the extracellular side. The chain crosses the membrane as a helical span at residues 1305–1325 (IIFICLALYEFSILLYGCWIV). Residues 1326 to 1340 (IKCRQYRSFPGSFNE) lie on the Cytoplasmic side of the membrane. The chain crosses the membrane as a helical span at residues 1341-1361 (FFYIGVLIYVLTVILVVSIPI). Over 1362 to 1372 (GFALLNSALTD) the chain is Extracellular. Residues 1373 to 1393 (FLLYSIPILVLIVAIIGLLFA) traverse the membrane as a helical segment. The Cytoplasmic segment spans residues 1394–1604 (PKFYFLFRTD…KSSQNSPLLD (211 aa)). Residues 1457–1604 (TGSNTSDDVS…KSSQNSPLLD (148 aa)) form a disordered region. 2 stretches are compositionally biased toward low complexity: residues 1471–1527 (FDSP…NKNN) and 1534–1556 (SSSN…GRSS). Basic residues predominate over residues 1563-1572 (NNKKNRRKNS). Positions 1573-1584 (LRTPILNSLLSP) are enriched in polar residues.

It belongs to the G-protein coupled receptor 3 family. GABA-B receptor subfamily.

The protein resides in the membrane. The polypeptide is Metabotropic glutamate receptor-like protein R (grlR) (Dictyostelium discoideum (Social amoeba)).